The following is a 443-amino-acid chain: DNA primase DnaG (443 aa).

In terms of domain architecture, Toprim spans 169–243; that stretch reads DSIIIVEGRA…DIDYVSRAPY (75 aa). Residues glutamate 175, aspartate 217, and aspartate 219 each coordinate Mg(2+).

Belongs to the archaeal DnaG primase family. In terms of assembly, forms a ternary complex with MCM helicase and DNA. It depends on Mg(2+) as a cofactor.

It catalyses the reaction ssDNA + n NTP = ssDNA/pppN(pN)n-1 hybrid + (n-1) diphosphate.. Its function is as follows. RNA polymerase that catalyzes the synthesis of short RNA molecules used as primers for DNA polymerase during DNA replication. This Methanococcus vannielii (strain ATCC 35089 / DSM 1224 / JCM 13029 / OCM 148 / SB) protein is DNA primase DnaG.